The chain runs to 294 residues: MYB-like transcription factor ODO1 (294 aa).

HTH myb-type domains lie at 9–61 (KLGV…TNYL) and 62–116 (RPDL…KKKL). DNA-binding regions (H-T-H motif) lie at residues 37 to 61 (WRAVPKLAGLKRCGKSCRLRWTNYL) and 89 to 112 (WSKIAARLPGRTDNEIKNHWNTHI). 2 disordered regions span residues 128–152 (PLKKEANLSDQPTTESDQNKENGHQ) and 171–191 (TEFDNNSSFSSSASSSENSSC).

In terms of tissue distribution, restricted to the petals, with the highest expression in the limb, probably in both epidermal and mesophyll cell layers.

The protein localises to the nucleus. Its function is as follows. R2R3 MYB-type transcription factor controlling the production of volatile organic compounds (VOCs), including floral volatile benzenoids and phenylpropanoids (FVBP), in flowers of fragrant cultivars (e.g. cv. Mitchell and cv. V26) by regulating the shikimate pathway, via the activation of several genes (e.g. EPSPS, ADT1, PAL1, CFAT and CCoAOMT1). This scent, mostly produced in the evening and night by the petals, attracts the pollinators (e.g. the night-active hawkmoth pollinator Manduca sexta). Promotes the expression of ABCG1 in petals three hours before the onset of volatile scent emission. Anthocyanins production is not controlled by ODO1 as color and scent are produced at different stages of development. Seems to trigger a negative feed-back loop that represses the expression of EOBI. This is MYB-like transcription factor ODO1 from Petunia hybrida (Petunia).